The sequence spans 268 residues: Tryptophan synthase alpha chain (268 aa).

Residues glutamate 49 and aspartate 60 each act as proton acceptor in the active site.

The protein belongs to the TrpA family. Tetramer of two alpha and two beta chains.

The enzyme catalyses (1S,2R)-1-C-(indol-3-yl)glycerol 3-phosphate + L-serine = D-glyceraldehyde 3-phosphate + L-tryptophan + H2O. It functions in the pathway amino-acid biosynthesis; L-tryptophan biosynthesis; L-tryptophan from chorismate: step 5/5. The alpha subunit is responsible for the aldol cleavage of indoleglycerol phosphate to indole and glyceraldehyde 3-phosphate. This chain is Tryptophan synthase alpha chain, found in Haemophilus influenzae (strain PittGG).